Here is a 429-residue protein sequence, read N- to C-terminus: Citrate synthase, chromosomal (429 aa).

Catalysis depends on residues His306 and Asp364.

This sequence belongs to the citrate synthase family.

It carries out the reaction oxaloacetate + acetyl-CoA + H2O = citrate + CoA + H(+). It participates in carbohydrate metabolism; tricarboxylic acid cycle; isocitrate from oxaloacetate: step 1/2. This is Citrate synthase, chromosomal (ccsA) from Rhizobium tropici.